We begin with the raw amino-acid sequence, 122 residues long: Large ribosomal subunit protein uL14 (122 aa).

It belongs to the universal ribosomal protein uL14 family. In terms of assembly, part of the 50S ribosomal subunit. Forms a cluster with proteins L3 and L19. In the 70S ribosome, L14 and L19 interact and together make contacts with the 16S rRNA in bridges B5 and B8.

In terms of biological role, binds to 23S rRNA. Forms part of two intersubunit bridges in the 70S ribosome. The protein is Large ribosomal subunit protein uL14 of Streptococcus gordonii (strain Challis / ATCC 35105 / BCRC 15272 / CH1 / DL1 / V288).